The sequence spans 544 residues: Membrane protein insertase YidC (544 aa).

Residues 6–26 form a helical membrane-spanning segment; that stretch reads NILLIGLLFVSFLLWQQWQAD. The interval 34 to 58 is disordered; that stretch reads AAQTQSSIPASTVADSHSSDVPDAD. Polar residues predominate over residues 39–49; it reads SSIPASTVADS. 4 helical membrane passes run 345-365, 423-443, 460-480, and 503-523; these read LLMF…LITL, GGCL…WVLL, LSVQ…MFVM, and VIFT…WLVG.

Belongs to the OXA1/ALB3/YidC family. Type 1 subfamily. Interacts with the Sec translocase complex via SecD. Specifically interacts with transmembrane segments of nascent integral membrane proteins during membrane integration.

It localises to the cell inner membrane. In terms of biological role, required for the insertion and/or proper folding and/or complex formation of integral membrane proteins into the membrane. Involved in integration of membrane proteins that insert both dependently and independently of the Sec translocase complex, as well as at least some lipoproteins. Aids folding of multispanning membrane proteins. The chain is Membrane protein insertase YidC from Shewanella halifaxensis (strain HAW-EB4).